The sequence spans 952 residues: Leucine--tRNA ligase (952 aa).

The 'HIGH' region motif lies at 66-77 (PYPSGAGLHVGH). The 'KMSKS' region signature appears at 722–726 (KMGKS). Position 725 (Lys-725) interacts with ATP.

This sequence belongs to the class-I aminoacyl-tRNA synthetase family.

The protein localises to the cytoplasm. The catalysed reaction is tRNA(Leu) + L-leucine + ATP = L-leucyl-tRNA(Leu) + AMP + diphosphate. The sequence is that of Leucine--tRNA ligase from Corynebacterium glutamicum (strain ATCC 13032 / DSM 20300 / JCM 1318 / BCRC 11384 / CCUG 27702 / LMG 3730 / NBRC 12168 / NCIMB 10025 / NRRL B-2784 / 534).